The primary structure comprises 642 residues: Sodium- and chloride-dependent neutral and basic amino acid transporter B(0+) (642 aa).

At 1 to 44 (MDKLKCPSFFKCREKEKVSASSENFHVGENDENQDRGNWSKKSD) the chain is on the cytoplasmic side. A run of 3 helical transmembrane segments spans residues 45 to 65 (YLLS…FPYL), 72 to 92 (GAFL…LFFL), and 110 to 130 (ILPL…FVTI). Over 131–234 (YYNVIIAYSL…RSSGMNETGV (104 aa)) the chain is Extracellular. Asn-155, Asn-163, Asn-174, Asn-189, Asn-197, Asn-202, and Asn-230 each carry an N-linked (GlcNAc...) asparagine glycan. 2 helical membrane-spanning segments follow: residues 235-255 (IVWY…AALF) and 261-281 (SGKV…ILLV). N-linked (GlcNAc...) asparagine glycosylation is present at Asn-302. Helical transmembrane passes span 315 to 335 (AATQ…ALSS), 348 to 368 (IVVC…IFSI), 399 to 419 (LAQL…LLTL), 450 to 477 (ITLG…VHLI), 480 to 500 (FCAG…IIWI), 528 to 548 (CWFV…LVQF), and 563 to 583 (VALG…MAII). The Cytoplasmic segment spans residues 584-642 (KIIQAKGNIFQRLISCCRPASNWGPYLEQHRGERYKDMVDPKKEADHEIPTVSGSRKPE). The segment covering 622 to 632 (VDPKKEADHEI) has biased composition (basic and acidic residues). The tract at residues 622–642 (VDPKKEADHEIPTVSGSRKPE) is disordered.

It belongs to the sodium:neurotransmitter symporter (SNF) (TC 2.A.22) family. SLC6A14 subfamily. As to expression, levels are highest in adult and fetal lung, in trachea and salivary gland. Lower levels detected in mammary gland, stomach and pituitary gland, and very low levels in colon, uterus, prostate and testis.

It localises to the membrane. The protein resides in the apical cell membrane. The enzyme catalyses glycine(out) + chloride(out) + 2 Na(+)(out) = glycine(in) + chloride(in) + 2 Na(+)(in). The catalysed reaction is L-leucine(out) + chloride(out) + 2 Na(+)(out) = L-leucine(in) + chloride(in) + 2 Na(+)(in). It catalyses the reaction L-glutamine(out) + chloride(out) + 2 Na(+)(out) = L-glutamine(in) + chloride(in) + 2 Na(+)(in). It carries out the reaction L-arginine(out) + chloride(out) + 2 Na(+)(out) = L-arginine(in) + chloride(in) + 2 Na(+)(in). The enzyme catalyses (R)-carnitine(out) + chloride(out) + 2 Na(+)(out) = (R)-carnitine(in) + chloride(in) + 2 Na(+)(in). The catalysed reaction is O-butanoyl-(R)-carnitine(out) + chloride(out) + 2 Na(+)(out) = O-butanoyl-(R)-carnitine(in) + chloride(in) + 2 Na(+)(in). It catalyses the reaction O-propanoyl-(R)-carnitine(out) + chloride(out) + 2 Na(+)(out) = O-propanoyl-(R)-carnitine(in) + chloride(in) + 2 Na(+)(in). It carries out the reaction L-isoleucine(out) + chloride(out) + 2 Na(+)(out) = L-isoleucine(in) + chloride(in) + 2 Na(+)(in). The enzyme catalyses L-methionine(out) + chloride(out) + 2 Na(+)(out) = L-methionine(in) + chloride(in) + 2 Na(+)(in). The catalysed reaction is L-valine(out) + chloride(out) + 2 Na(+)(out) = L-valine(in) + chloride(in) + 2 Na(+)(in). It catalyses the reaction L-alanine(out) + chloride(out) + 2 Na(+)(out) = L-alanine(in) + chloride(in) + 2 Na(+)(in). It carries out the reaction L-serine(out) + chloride(out) + 2 Na(+)(out) = L-serine(in) + chloride(in) + 2 Na(+)(in). The enzyme catalyses L-cysteine(out) + chloride(out) + 2 Na(+)(out) = L-cysteine(in) + chloride(in) + 2 Na(+)(in). The catalysed reaction is L-asparagine(out) + chloride(out) + 2 Na(+)(out) = L-asparagine(in) + chloride(in) + 2 Na(+)(in). It catalyses the reaction L-threonine(out) + chloride(out) + 2 Na(+)(out) = L-threonine(in) + chloride(in) + 2 Na(+)(in). It carries out the reaction L-phenylalanine(out) + chloride(out) + 2 Na(+)(out) = L-phenylalanine(in) + chloride(in) + 2 Na(+)(in). The enzyme catalyses L-tryptophan(out) + chloride(out) + 2 Na(+)(out) = L-tryptophan(in) + chloride(in) + 2 Na(+)(in). The catalysed reaction is L-tyrosine(out) + chloride(out) + 2 Na(+)(out) = L-tyrosine(in) + chloride(in) + 2 Na(+)(in). It catalyses the reaction L-histidine(out) + chloride(out) + 2 Na(+)(out) = L-histidine(in) + chloride(in) + 2 Na(+)(in). It carries out the reaction L-lysine(out) + chloride(out) + 2 Na(+)(out) = L-lysine(in) + chloride(in) + 2 Na(+)(in). The enzyme catalyses beta-alanine(out) + chloride(out) + 2 Na(+)(out) = beta-alanine(in) + chloride(in) + 2 Na(+)(in). Functionally, amino acid transporter that plays an important role in the absorption of amino acids in the intestinal tract. Mediates the uptake of a broad range of neutral and cationic amino acids (with the exception of proline) in a Na(+)/Cl(-)-dependent manner. Transports non-alpha-amino acids such as beta-alanine with low affinity, and has a higher affinity for dipolar and cationic amino acids such as leucine and lysine. Can also transport carnitine, butirylcarnitine and propionylcarnitine coupled to the transmembrane gradients of Na(+) and Cl(-). The sequence is that of Sodium- and chloride-dependent neutral and basic amino acid transporter B(0+) from Homo sapiens (Human).